A 381-amino-acid polypeptide reads, in one-letter code: Chaperone protein DnaJ (381 aa).

Positions 5 to 70 (DFYEVLGVSR…QKKAAYDQYG (66 aa)) constitute a J domain. The CR-type zinc finger occupies 136-214 (GVSKEIEVPT…CHGQGRKQKT (79 aa)). Cysteine 149, cysteine 152, cysteine 166, cysteine 169, cysteine 188, cysteine 191, cysteine 202, and cysteine 205 together coordinate Zn(2+). 4 CXXCXGXG motif repeats span residues 149–156 (CDICDGSG), 166–173 (CGTCHGHG), 188–195 (CPTCNGKG), and 202–209 (CNSCHGQG).

The protein belongs to the DnaJ family. In terms of assembly, homodimer. Zn(2+) serves as cofactor.

The protein localises to the cytoplasm. In terms of biological role, participates actively in the response to hyperosmotic and heat shock by preventing the aggregation of stress-denatured proteins and by disaggregating proteins, also in an autonomous, DnaK-independent fashion. Unfolded proteins bind initially to DnaJ; upon interaction with the DnaJ-bound protein, DnaK hydrolyzes its bound ATP, resulting in the formation of a stable complex. GrpE releases ADP from DnaK; ATP binding to DnaK triggers the release of the substrate protein, thus completing the reaction cycle. Several rounds of ATP-dependent interactions between DnaJ, DnaK and GrpE are required for fully efficient folding. Also involved, together with DnaK and GrpE, in the DNA replication of plasmids through activation of initiation proteins. This chain is Chaperone protein DnaJ, found in Vibrio atlanticus (strain LGP32) (Vibrio splendidus (strain Mel32)).